Reading from the N-terminus, the 249-residue chain is ATP synthase subunit a, chloroplastic (249 aa).

The next 5 membrane-spanning stretches (helical) occupy residues 38–58 (AQVL…AVLA), 97–117 (VPFI…GALL), 136–156 (INTT…AGLH), 201–221 (LVVA…MMFL), and 222–242 (GLFT…AYIG).

The protein belongs to the ATPase A chain family. In terms of assembly, F-type ATPases have 2 components, CF(1) - the catalytic core - and CF(0) - the membrane proton channel. CF(1) has five subunits: alpha(3), beta(3), gamma(1), delta(1), epsilon(1). CF(0) has four main subunits: a, b, b' and c.

Its subcellular location is the plastid. It is found in the chloroplast thylakoid membrane. Functionally, key component of the proton channel; it plays a direct role in the translocation of protons across the membrane. This is ATP synthase subunit a, chloroplastic from Physcomitrium patens (Spreading-leaved earth moss).